The sequence spans 298 residues: Glutamyl-Q tRNA(Asp) synthetase (298 aa).

Residues 8-12 and Glu44 each bind L-glutamate; that span reads RFAPS. A 'HIGH' region motif is present at residues 11-21; that stretch reads PSPTGPLHFGS. Zn(2+)-binding residues include Cys100, Cys102, Tyr123, and Cys127. 2 residues coordinate L-glutamate: Tyr183 and Arg201. The short motif at 239 to 243 is the 'KMSKS' region element; the sequence is KLSKQ. Lys242 is an ATP binding site.

Belongs to the class-I aminoacyl-tRNA synthetase family. GluQ subfamily. Requires Zn(2+) as cofactor.

Catalyzes the tRNA-independent activation of glutamate in presence of ATP and the subsequent transfer of glutamate onto a tRNA(Asp). Glutamate is transferred on the 2-amino-5-(4,5-dihydroxy-2-cyclopenten-1-yl) moiety of the queuosine in the wobble position of the QUC anticodon. The protein is Glutamyl-Q tRNA(Asp) synthetase of Burkholderia orbicola (strain MC0-3).